The sequence spans 238 residues: Protein TIFY 3A (238 aa).

One can recognise a Tify 1 domain in the interval 39–74 (EPDASTQLTIIFGGSCRVFNGVPAQKVQEIIRIAFA). A Jas 1 motif is present at residues 101 to 120 (PIARRRSLQRFLEKRRDRST). A Nuclear localization signal 1 motif is present at residues 103–110 (ARRRSLQR). A Tify 2 domain is found at 125 to 160 (SMILPSQLTIIFGGSFSVFDGIPAEKVQEILHIAAA). A Jas 2 motif is present at residues 197 to 222 (PIARRRSLQRFFEKRRHRFVHTKPYS). Positions 199–206 (ARRRSLQR) match the Nuclear localization signal 2 motif. Residues 219 to 238 (KPYSATTSEADKNETSPIVT) are disordered.

It belongs to the TIFY/JAZ family. In terms of assembly, interacts with MYC2, MYB21, MYB24, AFPH2/NINJA, TIFY10A/JAZ1, TIFY10B/JAZ2, TIFY6B/JAZ3, TIFY6A/JAZ4, TIFY7/JAZ9 and TIFY9/JAZ10. Post-translationally, ubiquitinated. Targeted for degradation by the SCF(COI1) E3 ubiquitin ligase-proteasome pathway during jasmonate signaling.

It is found in the nucleus. Repressor of jasmonate (JA) responses. Targets MYC2, MYC3 and MYC4 that are JA-dependent transcription activators. This chain is Protein TIFY 3A (TIFY3A), found in Arabidopsis thaliana (Mouse-ear cress).